The chain runs to 119 residues: Large ribosomal subunit protein uL24 (119 aa).

This sequence belongs to the universal ribosomal protein uL24 family. Part of the 50S ribosomal subunit.

One of two assembly initiator proteins, it binds directly to the 5'-end of the 23S rRNA, where it nucleates assembly of the 50S subunit. Functionally, located at the polypeptide exit tunnel on the outside of the subunit. This is Large ribosomal subunit protein uL24 from Methanococcus maripaludis (strain C5 / ATCC BAA-1333).